Here is a 407-residue protein sequence, read N- to C-terminus: Probable endo-beta-1,4-glucanase celB (407 aa).

A signal peptide spans 1–18; sequence MAQTLAAASLVLVPLVTA. An N-linked (GlcNAc...) asparagine glycan is attached at Asn136. Catalysis depends on Glu216, which acts as the Nucleophile. Glu221 serves as the catalytic Proton donor.

The protein belongs to the glycosyl hydrolase 7 (cellulase C) family.

Its subcellular location is the secreted. The enzyme catalyses Endohydrolysis of (1-&gt;4)-beta-D-glucosidic linkages in cellulose, lichenin and cereal beta-D-glucans.. Has endoglucanase activity on substrates containing beta-1,4 glycosidic bonds, like in carboxymethylcellulose (CMC), hydroxyethylcellulose (HEC) and beta-glucan. Involved in the degradation of complex natural cellulosic substrates. This chain is Probable endo-beta-1,4-glucanase celB (celB), found in Aspergillus fumigatus (strain ATCC MYA-4609 / CBS 101355 / FGSC A1100 / Af293) (Neosartorya fumigata).